The primary structure comprises 388 residues: Beta-1,4-galactosyltransferase 5 (388 aa).

At 1–14 the chain is on the cytoplasmic side; that stretch reads MRARRGLLRLPRRS. Residues 15 to 35 form a helical; Signal-anchor for type II membrane protein membrane-spanning segment; sequence LLAALFFFSLSSSLLYFVYVA. The Lumenal portion of the chain corresponds to 36-388; it reads PGIVNTYLFM…TPELAQVNEY (353 aa). Residues asparagine 77, asparagine 81, asparagine 90, asparagine 111, and asparagine 128 are each glycosylated (N-linked (GlcNAc...) asparagine). The cysteines at positions 114 and 158 are disulfide-linked. Residues 169–173, 208–210, 235–236, tyrosine 264, and tryptophan 296 contribute to the UDP-alpha-D-galactose site; these read PFRNR, FNR, and VD. Residues cysteine 229 and cysteine 248 are joined by a disulfide bond. Aspartate 236 lines the Mn(2+) pocket. Residue 298–301 coordinates N-acetyl-D-glucosamine; the sequence is GEDD. Residue histidine 329 coordinates Mn(2+). 329-330 serves as a coordination point for UDP-alpha-D-galactose; that stretch reads HH. An N-acetyl-D-glucosamine-binding site is contributed by arginine 340. N-linked (GlcNAc...) asparagine glycosylation is found at asparagine 364 and asparagine 373.

This sequence belongs to the glycosyltransferase 7 family. The cofactor is Mn(2+). Ubiquitously expressed.

Its subcellular location is the golgi apparatus. The protein localises to the golgi stack membrane. The enzyme catalyses a beta-D-glucosyl-(1&lt;-&gt;1')-N-acylsphing-4-enine + UDP-alpha-D-galactose = a beta-D-Gal-(1-&gt;4)-beta-D-Glc-(1&lt;-&gt;1)-Cer(d18:1(4E)) + UDP + H(+). Its pathway is protein modification; protein glycosylation. It participates in sphingolipid metabolism. Catalyzes the synthesis of lactosylceramide (LacCer) via the transfer of galactose from UDP-galactose to glucosylceramide (GlcCer). LacCer is the starting point in the biosynthesis of all gangliosides (membrane-bound glycosphingolipids) which play pivotal roles in the CNS including neuronal maturation and axonal and myelin formation. Plays a role in the glycosylation of BMPR1A and regulation of its protein stability. Essential for extraembryonic development during early embryogenesis. This is Beta-1,4-galactosyltransferase 5 from Homo sapiens (Human).